The chain runs to 470 residues: Iron-sulfur cluster assembly protein SufB (470 aa).

The protein belongs to the iron-sulfur cluster assembly SufBD family. In terms of assembly, component of a complex composed of SufB, SufC and SufD in a stoichiometric ratio of 1:2:1. Interacts with SufC. Interacts with SufD.

The protein operates within cofactor biosynthesis; iron-sulfur cluster biosynthesis. Participates in the sulfur mobilization (SUF) pathway for iron-sulfur (Fe-S) cluster biogenesis. As part of a complex consisting of SufB-SufC(2)-SufD, involved in assembly of [4Fe-4S] clusters. Exhibits ATPase activity. The protein is Iron-sulfur cluster assembly protein SufB of Plasmodium falciparum (isolate 3D7).